The chain runs to 771 residues: Probable glycosyltransferase STELLO1 (771 aa).

The disordered stretch occupies residues 1-23; the sequence is MLVQDRAAPSPAKPPKSQIRELP. Residues 1-50 are Cytoplasmic-facing; sequence MLVQDRAAPSPAKPPKSQIRELPTHQQIRRRFSEPKNLDFSTWFSENLSR. The helical transmembrane segment at 51-71 threads the bilayer; sequence IAVFSLLIVTIVAFFFLYNTT. The Lumenal segment spans residues 72–771; the sequence is DTASLLCFQS…EGDPLLMELV (700 aa). 2 N-linked (GlcNAc...) asparagine glycosylation sites follow: asparagine 242 and asparagine 729.

Belongs to the STELLO family. As to quaternary structure, homo- and heterodimer with STL2. Interacts with CESA1, CESA3, CESA4, CESA6, CESA7 and CESA8, but not with GOT1. In terms of tissue distribution, expressed in cells that are expanding or producing secondary cell walls.

The protein localises to the golgi apparatus membrane. Probable glycosyltransferase regulating the assembly and trafficking of cellulose synthase complexes. The protein is Probable glycosyltransferase STELLO1 of Arabidopsis thaliana (Mouse-ear cress).